The sequence spans 159 residues: Sec-independent protein translocase protein TatB (159 aa).

Residues 1-21 form a helical membrane-spanning segment; sequence MIDIGLSKMALIGAVALIVIG.

Belongs to the TatB family. The Tat system comprises two distinct complexes: a TatABC complex, containing multiple copies of TatA, TatB and TatC subunits, and a separate TatA complex, containing only TatA subunits. Substrates initially bind to the TatABC complex, which probably triggers association of the separate TatA complex to form the active translocon.

The protein localises to the cell inner membrane. In terms of biological role, part of the twin-arginine translocation (Tat) system that transports large folded proteins containing a characteristic twin-arginine motif in their signal peptide across membranes. Together with TatC, TatB is part of a receptor directly interacting with Tat signal peptides. TatB may form an oligomeric binding site that transiently accommodates folded Tat precursor proteins before their translocation. The polypeptide is Sec-independent protein translocase protein TatB (Acidovorax sp. (strain JS42)).